The sequence spans 338 residues: MVKVGINGFGRIGRIVLRNALQFQDIEVVAVNDPFIDLEYMAYMFKYDSVHGRFKGTVEVKNGSFVVDGRPMKVFAERDPAAIPWGSVGADYVVESTGVFTTIDKASAHLKGGAKKVVISAPSADAPMYVCGVNLDKYNPKDTIISNASCTTNCLATLAKVIHDNFGIVEGLMTTVHATTATQKTVDGPSHKDWRGGRGVGNNIIPSSTGAAKAVGKVIPSLNGKLTGLSMRVPTQDVSVVDLVVRLEKPASYEQIKEVMRKAAEGEYKGIIAYTDEDVVSTDFISDNNSCVFDAKAGIQLSPNFVKLIAWYDNEWGYSRRVCNLLQYVAKEDAKAGI.

NAD(+) is bound by residues 11-12 (RI), aspartate 33, and arginine 78. D-glyceraldehyde 3-phosphate is bound by residues 149–151 (SCT), threonine 180, 209–210 (TG), and arginine 232. Cysteine 150 acts as the Nucleophile in catalysis. Asparagine 314 contributes to the NAD(+) binding site.

The protein belongs to the glyceraldehyde-3-phosphate dehydrogenase family. In terms of assembly, homotetramer.

It localises to the cytoplasm. It catalyses the reaction D-glyceraldehyde 3-phosphate + phosphate + NAD(+) = (2R)-3-phospho-glyceroyl phosphate + NADH + H(+). It functions in the pathway carbohydrate degradation; glycolysis; pyruvate from D-glyceraldehyde 3-phosphate: step 1/5. The sequence is that of Glyceraldehyde-3-phosphate dehydrogenase 2 (gpd2) from Agaricus bisporus (White button mushroom).